A 300-amino-acid chain; its full sequence is Ribosomal RNA small subunit methyltransferase H (300 aa).

S-adenosyl-L-methionine contacts are provided by residues 33-35, Asp52, Phe79, Asp100, and Gln107; that span reads GGH.

The protein belongs to the methyltransferase superfamily. RsmH family.

The protein localises to the cytoplasm. The catalysed reaction is cytidine(1402) in 16S rRNA + S-adenosyl-L-methionine = N(4)-methylcytidine(1402) in 16S rRNA + S-adenosyl-L-homocysteine + H(+). In terms of biological role, specifically methylates the N4 position of cytidine in position 1402 (C1402) of 16S rRNA. This Mycoplasmopsis agalactiae (strain NCTC 10123 / CIP 59.7 / PG2) (Mycoplasma agalactiae) protein is Ribosomal RNA small subunit methyltransferase H.